A 627-amino-acid chain; its full sequence is Neutral endopeptidase (627 aa).

The Peptidase M13 domain maps to 1–627 (MTRIQDDLFA…RAPENRLKIW (627 aa)). Position 475 (histidine 475) interacts with Zn(2+). Glutamate 476 is an active-site residue. Zn(2+)-binding residues include histidine 479 and glutamate 535. The active-site Proton donor is aspartate 539.

The protein belongs to the peptidase M13 family. In terms of assembly, monomer. Zn(2+) serves as cofactor.

The protein resides in the cytoplasm. Functionally, endopeptidase with broad substrate specificity for several oligopeptides. This is Neutral endopeptidase (pepO) from Lactococcus lactis subsp. cremoris (Streptococcus cremoris).